A 375-amino-acid polypeptide reads, in one-letter code: ATP-sensitive inward rectifier potassium channel 15 (375 aa).

Over 1 to 60 the chain is Cytoplasmic; that stretch reads MDAIHLGMSSAPLVKHTNGVGLKAHRPRVMSKSGHSNVRIDKVDGIYLLYLQDLWTTVID. A helical membrane pass occupies residues 61–87; that stretch reads MKWRYKLTLFAATFVMTWFLFGVVYYA. Topologically, residues 88–113 are extracellular; that stretch reads IAFIHGDLQLGESNSNHTPCIMKVDS. The helical; Pore-forming intramembrane region spans 114-130; it reads LTGAFLFSLESQTTIGY. A Selectivity filter motif is present at residues 127–132; it reads TIGYGV. Topologically, residues 131 to 139 are extracellular; the sequence is GVRSITEEC. A helical membrane pass occupies residues 140 to 165; the sequence is PHAIFLLVAQLVITTLIEIFITGTFL. Over 166-375 the chain is Cytoplasmic; sequence AKIARPKKRA…RSLLLQQSNV (210 aa).

This sequence belongs to the inward rectifier-type potassium channel (TC 1.A.2.1) family. KCNJ15 subfamily. As to quaternary structure, can form heteromultimeric channels with Kir5.1/KCNJ16. Interacts with PATJ. As to expression, expressed in the proximal segment of the nephron.

The protein resides in the membrane. The protein localises to the cell membrane. The catalysed reaction is K(+)(in) = K(+)(out). With respect to regulation, channel activity is regulated by variations of cytosolic pH; reversibly inhibited by acidic pH values. Inhibited by Ba(2+) and Cs(+) in a voltage-dependent manner. Its function is as follows. Inward rectifier potassium channels are characterized by a greater tendency to allow potassium to flow into the cell rather than out of it. Their voltage dependence is regulated by the concentration of extracellular potassium; as external potassium is raised, the voltage range of the channel opening shifts to more positive voltages. The inward rectification is mainly due to the blockage of outward current by internal magnesium. The chain is ATP-sensitive inward rectifier potassium channel 15 (Kcnj15) from Mus musculus (Mouse).